The sequence spans 170 residues: Ribosome maturation factor RimM (170 aa).

One can recognise a PRC barrel domain in the interval 95–168 (EDAYYYHEIV…IIKVQLMEGM (74 aa)).

This sequence belongs to the RimM family. In terms of assembly, binds ribosomal protein uS19.

It is found in the cytoplasm. Its function is as follows. An accessory protein needed during the final step in the assembly of 30S ribosomal subunit, possibly for assembly of the head region. Essential for efficient processing of 16S rRNA. May be needed both before and after RbfA during the maturation of 16S rRNA. It has affinity for free ribosomal 30S subunits but not for 70S ribosomes. The protein is Ribosome maturation factor RimM of Oceanobacillus iheyensis (strain DSM 14371 / CIP 107618 / JCM 11309 / KCTC 3954 / HTE831).